The chain runs to 138 residues: Nucleoside diphosphate kinase (138 aa).

The ATP site is built by K12, Y60, R88, T94, R105, and N115. H118 (pros-phosphohistidine intermediate) is an active-site residue.

This sequence belongs to the NDK family. Homotetramer. Mg(2+) serves as cofactor.

It is found in the cytoplasm. It catalyses the reaction a 2'-deoxyribonucleoside 5'-diphosphate + ATP = a 2'-deoxyribonucleoside 5'-triphosphate + ADP. The catalysed reaction is a ribonucleoside 5'-diphosphate + ATP = a ribonucleoside 5'-triphosphate + ADP. Its function is as follows. Major role in the synthesis of nucleoside triphosphates other than ATP. The ATP gamma phosphate is transferred to the NDP beta phosphate via a ping-pong mechanism, using a phosphorylated active-site intermediate. The chain is Nucleoside diphosphate kinase from Cutibacterium acnes (strain DSM 16379 / KPA171202) (Propionibacterium acnes).